We begin with the raw amino-acid sequence, 156 residues long: MPRRRVVAKREVLPDPKFGNVTLAKFMNHVMISGKKSVAERIVYGALDLVKEKLNKDPLEVFDEALENIAPLVEVKSRRVGGATYQVPVEVRPSRREALAMRWLVEYSRNRGEKSMPQRLAGELIDASQNKGGAVKKREDVHRMAEANKAFSHFRF.

The protein belongs to the universal ribosomal protein uS7 family. Part of the 30S ribosomal subunit. Contacts proteins S9 and S11.

In terms of biological role, one of the primary rRNA binding proteins, it binds directly to 16S rRNA where it nucleates assembly of the head domain of the 30S subunit. Is located at the subunit interface close to the decoding center, probably blocks exit of the E-site tRNA. This chain is Small ribosomal subunit protein uS7, found in Teredinibacter turnerae (strain ATCC 39867 / T7901).